Reading from the N-terminus, the 222-residue chain is Cytidylate kinase (222 aa).

10–18 provides a ligand contact to ATP; the sequence is GPAGAGKST.

The protein belongs to the cytidylate kinase family. Type 1 subfamily.

It is found in the cytoplasm. It carries out the reaction CMP + ATP = CDP + ADP. The enzyme catalyses dCMP + ATP = dCDP + ADP. The polypeptide is Cytidylate kinase (Halalkalibacterium halodurans (strain ATCC BAA-125 / DSM 18197 / FERM 7344 / JCM 9153 / C-125) (Bacillus halodurans)).